We begin with the raw amino-acid sequence, 267 residues long: N-acetylgalactosamine permease IIC component 1 (267 aa).

Over 1-10 the chain is Periplasmic; that stretch reads MHEITLLQGL. The PTS EIIC type-4 domain occupies 1 to 237; the sequence is MHEITLLQGL…VAVLGAGFAV (237 aa). Residues 11-31 form a helical membrane-spanning segment; the sequence is SLAALVFVLGIDFWLEALFLF. Over 32–33 the chain is Cytoplasmic; the sequence is RP. Residues 34-54 traverse the membrane as a helical segment; it reads IIVCTLTGAILGDIQTGLITG. The Periplasmic segment spans residues 55 to 66; that stretch reads GLTELAFAGLTP. A helical transmembrane segment spans residues 67–87; it reads AGGVQPPNPIMAGLMTTVIAW. Over 88–94 the chain is Cytoplasmic; the sequence is STGVDAK. The helical transmembrane segment at 95–115 threads the bilayer; it reads TAIGLGLPFSLLMQYVILFFY. The Periplasmic portion of the chain corresponds to 116-141; it reads SAFSLFMTKADKCAKEADTAAFSRLN. The chain crosses the membrane as a helical span at residues 142-162; that stretch reads WTTMLIVASAYAVIAFLCTYL. At 163-177 the chain is on the cytoplasmic side; it reads AQGAMQALVKAMPAW. Residues 178-198 traverse the membrane as a helical segment; the sequence is LTHGFEVAGGILPAVGFGLLL. At 199–209 the chain is on the periplasmic side; it reads RVMFKAQYIPY. A helical transmembrane segment spans residues 210–230; it reads LIAGFLFVCYIQVSNLLPVAV. Residues 231-267 are Cytoplasmic-facing; the sequence is LGAGFAVYEFFNAKSRQQAQPQPVASKNEEEDYSNGI.

The protein localises to the cell inner membrane. Its function is as follows. The phosphoenolpyruvate-dependent sugar phosphotransferase system (PTS), a major carbohydrate active -transport system, catalyzes the phosphorylation of incoming sugar substrates concomitant with their translocation across the cell membrane. This system is involved in N-acetylgalactosamine transport. The protein is N-acetylgalactosamine permease IIC component 1 (agaC) of Escherichia coli (strain K12).